The chain runs to 228 residues: L-ribulose-5-phosphate 4-epimerase UlaF (228 aa).

Substrate contacts are provided by residues 26–27, 43–44, and 72–73; these read GN, SG, and SS. Residues D74, H93, and H95 each coordinate Zn(2+). D118 acts as the Proton donor/acceptor in catalysis. H167 lines the Zn(2+) pocket. Y225 serves as the catalytic Proton donor/acceptor.

This sequence belongs to the aldolase class II family. AraD/FucA subfamily. Zn(2+) serves as cofactor.

The enzyme catalyses L-ribulose 5-phosphate = D-xylulose 5-phosphate. The protein operates within cofactor degradation; L-ascorbate degradation; D-xylulose 5-phosphate from L-ascorbate: step 4/4. In terms of biological role, catalyzes the isomerization of L-ribulose 5-phosphate to D-xylulose 5-phosphate. Is involved in the anaerobic L-ascorbate utilization. The polypeptide is L-ribulose-5-phosphate 4-epimerase UlaF (Shigella flexneri).